The primary structure comprises 592 residues: Tetrathionate sensor histidine kinase TtrS (592 aa).

A run of 2 helical transmembrane segments spans residues 11–31 (VLAAVGLLCHGAWAGTWNIGI) and 307–327 (VGGVILAFLLLTLNYIWVMLL). One can recognise a Histidine kinase domain in the interval 364–581 (GFAHELNQPL…VVTIHFLHEN (218 aa)). His-367 is subject to Phosphohistidine; by autocatalysis.

Autophosphorylated.

The protein resides in the cell inner membrane. The enzyme catalyses ATP + protein L-histidine = ADP + protein N-phospho-L-histidine.. Member of the two-component regulatory system TtrR/TtrS, which is required for synthesis of tetrathionate reductase. Probably functions as a sensor protein kinase which is autophosphorylated at a histidine residue in response to tetrathionate, and transfers its phosphate group to TtrR. During mice infection, the ability to use tetrathionate as an electron acceptor is a growth advantage for S.typhimurium over the competing microbiota in the lumen of the inflamed gut. The protein is Tetrathionate sensor histidine kinase TtrS (ttrS) of Salmonella typhimurium (strain LT2 / SGSC1412 / ATCC 700720).